We begin with the raw amino-acid sequence, 160 residues long: MTKKKAHKPGSATIALNKRARHEYFIEEEFEAGLALQGWEVKSLRAGKANISDSYVLLRDGEAFLFGANITPMAVASTHVVCDPTRTRKLLLNQRELDSLYGRVNREGYTVVALSLYWKNAWCKVKIGVAKGKKQHDKRSDIKEREWQVDKARIMKNAHR.

The protein belongs to the SmpB family.

The protein localises to the cytoplasm. Required for rescue of stalled ribosomes mediated by trans-translation. Binds to transfer-messenger RNA (tmRNA), required for stable association of tmRNA with ribosomes. tmRNA and SmpB together mimic tRNA shape, replacing the anticodon stem-loop with SmpB. tmRNA is encoded by the ssrA gene; the 2 termini fold to resemble tRNA(Ala) and it encodes a 'tag peptide', a short internal open reading frame. During trans-translation Ala-aminoacylated tmRNA acts like a tRNA, entering the A-site of stalled ribosomes, displacing the stalled mRNA. The ribosome then switches to translate the ORF on the tmRNA; the nascent peptide is terminated with the 'tag peptide' encoded by the tmRNA and targeted for degradation. The ribosome is freed to recommence translation, which seems to be the essential function of trans-translation. The sequence is that of SsrA-binding protein from Escherichia coli O139:H28 (strain E24377A / ETEC).